An 874-amino-acid chain; its full sequence is Alanine--tRNA ligase (874 aa).

Histidine 562, histidine 566, cysteine 664, and histidine 668 together coordinate Zn(2+).

It belongs to the class-II aminoacyl-tRNA synthetase family. Requires Zn(2+) as cofactor.

The protein resides in the cytoplasm. The catalysed reaction is tRNA(Ala) + L-alanine + ATP = L-alanyl-tRNA(Ala) + AMP + diphosphate. Functionally, catalyzes the attachment of alanine to tRNA(Ala) in a two-step reaction: alanine is first activated by ATP to form Ala-AMP and then transferred to the acceptor end of tRNA(Ala). Also edits incorrectly charged Ser-tRNA(Ala) and Gly-tRNA(Ala) via its editing domain. This Neisseria meningitidis serogroup C (strain 053442) protein is Alanine--tRNA ligase.